We begin with the raw amino-acid sequence, 181 residues long: Adenine phosphoribosyltransferase (181 aa).

This sequence belongs to the purine/pyrimidine phosphoribosyltransferase family. In terms of assembly, homodimer.

Its subcellular location is the cytoplasm. The catalysed reaction is AMP + diphosphate = 5-phospho-alpha-D-ribose 1-diphosphate + adenine. It participates in purine metabolism; AMP biosynthesis via salvage pathway; AMP from adenine: step 1/1. Catalyzes a salvage reaction resulting in the formation of AMP, that is energically less costly than de novo synthesis. The sequence is that of Adenine phosphoribosyltransferase from Mesorhizobium japonicum (strain LMG 29417 / CECT 9101 / MAFF 303099) (Mesorhizobium loti (strain MAFF 303099)).